The following is a 267-amino-acid chain: Small ribosomal subunit protein uS2 (267 aa).

The segment at 1–72 (MSGNEKEGLD…QLDEDVMPDE (72 aa)) is disordered. Acidic residues predominate over residues 10-72 (DASDSDFDPS…QLDEDVMPDE (63 aa)).

This sequence belongs to the universal ribosomal protein uS2 family. Post-translationally, the N-terminus is blocked.

This is Small ribosomal subunit protein uS2 (rps2) from Haloarcula marismortui (strain ATCC 43049 / DSM 3752 / JCM 8966 / VKM B-1809) (Halobacterium marismortui).